Here is a 261-residue protein sequence, read N- to C-terminus: uncharacterized protein (261 aa).

41 to 48 (GKSGSGKS) is a binding site for ATP.

This sequence belongs to the IIV-6 075L family.

This is an uncharacterized protein from Invertebrate iridescent virus 3 (IIV-3).